A 189-amino-acid polypeptide reads, in one-letter code: Parkinson disease protein 7 homolog (189 aa).

N-acetylalanine; in Protein/nucleic acid deglycase DJ-1, N-terminally processed is present on A2. S-palmitoyl cysteine attachment occurs at residues C46 and C53. Y67 is subject to Phosphotyrosine. The active-site Nucleophile is the C106. Position 106 is a cysteine sulfinic acid (-SO2H); alternate (C106). Residue C106 is the site of S-palmitoyl cysteine; alternate attachment. H126 is an active-site residue. K130 participates in a covalent cross-link: Glycyl lysine isopeptide (Lys-Gly) (interchain with G-Cter in SUMO). Position 148 is an N6-acetyllysine (K148). The residue at position 182 (K182) is an N6-succinyllysine.

It belongs to the peptidase C56 family. In terms of assembly, homodimer. Binds EFCAB6/DJBP and PIAS2. Part of a ternary complex containing PARK7, EFCAB6/DJBP and AR. Interacts (via N-terminus) with OTUD7B. Interacts with BBS1, HIPK1, CLCF1 and MTERF. Forms a complex with PINK1 and PRKN. Interacts (via C-terminus) with NCF1; the interaction is enhanced by LPS and modulates NCF1 phosphorylation and membrane translocation. Interacts with NENF. Requires Deglycase activity does not require glutathione as a cofactor, however, glycated glutathione constitutes a PARK7 substrate. as cofactor. In terms of processing, sumoylated on Lys-130 by PIAS2 or PIAS4; which is essential for cell-growth promoting activity and transforming activity. Post-translationally, undergoes cleavage of a C-terminal peptide and subsequent activation of protease activity in response to oxidative stress. Detected in liver, heart, spleen and testis (at protein level). Detected in liver, heart, spleen, kidney, epididymidis, vas deferens, sperm cells and testis.

It is found in the cell membrane. The protein resides in the cytoplasm. Its subcellular location is the nucleus. It localises to the membrane raft. The protein localises to the mitochondrion. It is found in the endoplasmic reticulum. The enzyme catalyses N(omega)-(1-hydroxy-2-oxopropyl)-L-arginyl-[protein] + H2O = lactate + L-arginyl-[protein] + H(+). It catalyses the reaction N(6)-(1-hydroxy-2-oxopropyl)-L-lysyl-[protein] + H2O = lactate + L-lysyl-[protein] + H(+). It carries out the reaction S-(1-hydroxy-2-oxopropyl)-L-cysteinyl-[protein] + H2O = lactate + L-cysteinyl-[protein] + H(+). The catalysed reaction is N(omega)-(1-hydroxy-2-oxoethyl)-L-arginyl-[protein] + H2O = L-arginyl-[protein] + glycolate + H(+). The enzyme catalyses N(6)-(1-hydroxy-2-oxoethyl)-L-lysyl-[protein] + H2O = glycolate + L-lysyl-[protein] + H(+). It catalyses the reaction S-(1-hydroxy-2-oxoethyl)-L-cysteinyl-[protein] + H2O = glycolate + L-cysteinyl-[protein] + H(+). It carries out the reaction N(2)-(1-hydroxy-2-oxopropyl)-dGTP + H2O = lactate + dGTP + H(+). The catalysed reaction is N(2)-(1-hydroxy-2-oxopropyl)-GTP + H2O = lactate + GTP + H(+). The enzyme catalyses N(2)-(1-hydroxy-2-oxopropyl)-GDP + H2O = lactate + GDP + H(+). It catalyses the reaction N(2)-(1-hydroxy-2-oxopropyl)-GMP + H2O = lactate + GMP + H(+). It carries out the reaction N(2)-(1-hydroxy-2-oxoethyl)-dGTP + H2O = dGTP + glycolate + H(+). The catalysed reaction is N(2)-(1-hydroxy-2-oxoethyl)-GTP + H2O = glycolate + GTP + H(+). The enzyme catalyses N(2)-(1-hydroxy-2-oxoethyl)-GDP + H2O = glycolate + GDP + H(+). It catalyses the reaction N(2)-(1-hydroxy-2-oxoethyl)-GMP + H2O = glycolate + GMP + H(+). It carries out the reaction an N(2)-(1-hydroxy-2-oxopropyl)-guanosine in RNA + H2O = a guanosine in RNA + lactate + H(+). The catalysed reaction is an N(2)-(1-hydroxy-2-oxopropyl)-2'-deoxyguanosine in DNA + H2O = a 2'-deoxyguanosine in DNA + lactate + H(+). The enzyme catalyses an N(2)-(1-hydroxy-2-oxoethyl)-guanosine in RNA + H2O = a guanosine in RNA + glycolate + H(+). It catalyses the reaction an N(2)-(1-hydroxy-2-oxoethyl)-2'-deoxyguanosine in DNA + H2O = a 2'-deoxyguanosine in DNA + glycolate + H(+). In terms of biological role, multifunctional protein with controversial molecular function which plays an important role in cell protection against oxidative stress and cell death acting as oxidative stress sensor and redox-sensitive chaperone and protease. It is involved in neuroprotective mechanisms like the stabilization of NFE2L2 and PINK1 proteins, male fertility as a positive regulator of androgen signaling pathway as well as cell growth and transformation through, for instance, the modulation of NF-kappa-B signaling pathway. Has been described as a protein and nucleotide deglycase that catalyzes the deglycation of the Maillard adducts formed between amino groups of proteins or nucleotides and reactive carbonyl groups of glyoxals. But this function is rebuted by other works. As a protein deglycase, repairs methylglyoxal- and glyoxal-glycated proteins, and releases repaired proteins and lactate or glycolate, respectively. Deglycates cysteine, arginine and lysine residues in proteins, and thus reactivates these proteins by reversing glycation by glyoxals. Acts on early glycation intermediates (hemithioacetals and aminocarbinols), preventing the formation of advanced glycation endproducts (AGE) that cause irreversible damage. Also functions as a nucleotide deglycase able to repair glycated guanine in the free nucleotide pool (GTP, GDP, GMP, dGTP) and in DNA and RNA. Is thus involved in a major nucleotide repair system named guanine glycation repair (GG repair), dedicated to reversing methylglyoxal and glyoxal damage via nucleotide sanitization and direct nucleic acid repair. Protects histones from adduction by methylglyoxal, controls the levels of methylglyoxal-derived argininine modifications on chromatin. Able to remove the glycations and restore histone 3, histone glycation disrupts both local and global chromatin architecture by altering histone-DNA interactions as well as histone acetylation and ubiquitination levels. Displays a very low glyoxalase activity that may reflect its deglycase activity. Eliminates hydrogen peroxide and protects cells against hydrogen peroxide-induced cell death. Required for correct mitochondrial morphology and function as well as for autophagy of dysfunctional mitochondria. Plays a role in regulating expression or stability of the mitochondrial uncoupling proteins SLC25A14 and SLC25A27 in dopaminergic neurons of the substantia nigra pars compacta and attenuates the oxidative stress induced by calcium entry into the neurons via L-type channels during pacemaking. Regulates astrocyte inflammatory responses, may modulate lipid rafts-dependent endocytosis in astrocytes and neuronal cells. In pancreatic islets, involved in the maintenance of mitochondrial reactive oxygen species (ROS) levels and glucose homeostasis in an age- and diet dependent manner. Protects pancreatic beta cells from cell death induced by inflammatory and cytotoxic setting. Binds to a number of mRNAs containing multiple copies of GG or CC motifs and partially inhibits their translation but dissociates following oxidative stress. Metal-binding protein able to bind copper as well as toxic mercury ions, enhances the cell protection mechanism against induced metal toxicity. In macrophages, interacts with the NADPH oxidase subunit NCF1 to direct NADPH oxidase-dependent ROS production, and protects against sepsis. This is Parkinson disease protein 7 homolog (PARK7) from Mesocricetus auratus (Golden hamster).